A 193-amino-acid chain; its full sequence is Large ribosomal subunit protein uL18 (193 aa).

This sequence belongs to the universal ribosomal protein uL18 family. In terms of assembly, part of the 50S ribosomal subunit. Contacts the 5S and 23S rRNAs.

Functionally, this is one of the proteins that bind and probably mediate the attachment of the 5S RNA into the large ribosomal subunit, where it forms part of the central protuberance. In Methanococcus maripaludis (strain DSM 14266 / JCM 13030 / NBRC 101832 / S2 / LL), this protein is Large ribosomal subunit protein uL18.